Consider the following 72-residue polypeptide: Small, acid-soluble spore protein C (72 aa).

The protein belongs to the alpha/beta-type SASP family.

Its function is as follows. SASP are bound to spore DNA. They are double-stranded DNA-binding proteins that cause DNA to change to an a-like conformation. They protect the DNA backbone from chemical and enzymatic cleavage and are thus involved in dormant spore's high resistance to UV light. The sequence is that of Small, acid-soluble spore protein C (sasP-C) from Priestia megaterium (Bacillus megaterium).